The chain runs to 975 residues: Nesprin-3 (975 aa).

Residues 1 to 925 (MTQQPQDDFD…LGSLFRRACC (925 aa)) lie on the Cytoplasmic side of the membrane. One copy of the Spectrin 1 repeat lies at 220–325 (REHEEYQAGV…WEEEEERLRG (106 aa)). Residues 617 to 645 (NHQHKMDQLSSDFQALQRSLEDLVDRCRQ) adopt a coiled-coil conformation. A Spectrin 2 repeat occupies 647-740 (VQEHCTFSHQ…RELAESWRAL (94 aa)). The KASH domain maps to 917–975 (GSLFRRACCVALPLQLLLLLFLLLLFLLPIREEDRSCTLANNFARSFTLMLRYNGPPPT). The helical; Anchor for type IV membrane protein transmembrane segment at 926 to 946 (VALPLQLLLLLFLLLLFLLPI) threads the bilayer. Over 947 to 975 (REEDRSCTLANNFARSFTLMLRYNGPPPT) the chain is Perinuclear space.

The protein belongs to the nesprin family. Core component of LINC complexes which are composed of inner nuclear membrane SUN domain-containing proteins coupled to outer nuclear membrane KASH domain-containing nesprins. SUN and KASH domain-containing proteins seem to bind each other promiscuously; however, differentially expression of LINC complex constituents can give rise to specific assemblies. Interacts with SUN1 and SUN2; probably forming respective LINC complexes. Interacts with PLEC (via actin-binding domain). Interacts with DST. Interacts with SYNE1 via spectrin repeats. Interacts (via KASH domain) with TOR1A (ATP-bound); the interaction is required for SYNE3 nuclear envelope localization. In terms of processing, the disulfid bond with SUN1 or SUN2 is required for stability of the respective LINC complex under tensile forces. Expressed in aortic endothelial cells (at protein level).

The protein resides in the nucleus outer membrane. It localises to the nucleus envelope. It is found in the rough endoplasmic reticulum. As a component of the LINC (LInker of Nucleoskeleton and Cytoskeleton) complex involved in the connection between the nuclear lamina and the cytoskeleton. The nucleocytoplasmic interactions established by the LINC complex play an important role in the transmission of mechanical forces across the nuclear envelope and in nuclear movement and positioning. Probable anchoring protein which tethers the nucleus to the cytoskeleton by binding PLEC which can associate with the intermediate filament system. Plays a role in the regulation of aortic epithelial cell morphology, and is required for flow-induced centrosome polarization and directional migration in aortic endothelial cells. The sequence is that of Nesprin-3 from Homo sapiens (Human).